Reading from the N-terminus, the 476-residue chain is ATP synthase subunit beta (476 aa).

An ATP-binding site is contributed by 154–161 (GGAGVGKT).

Belongs to the ATPase alpha/beta chains family. F-type ATPases have 2 components, CF(1) - the catalytic core - and CF(0) - the membrane proton channel. CF(1) has five subunits: alpha(3), beta(3), gamma(1), delta(1), epsilon(1). CF(0) has four main subunits: a(1), b(1), b'(1) and c(9-12).

The protein resides in the cell inner membrane. The catalysed reaction is ATP + H2O + 4 H(+)(in) = ADP + phosphate + 5 H(+)(out). Produces ATP from ADP in the presence of a proton gradient across the membrane. The catalytic sites are hosted primarily by the beta subunits. The chain is ATP synthase subunit beta from Rhodopseudomonas palustris (strain ATCC BAA-98 / CGA009).